We begin with the raw amino-acid sequence, 542 residues long: Calcium-dependent protein kinase 15 (542 aa).

The tract at residues 1-73 (MGARASRHRQ…QAPQQAAAED (73 aa)) is disordered. Gly2 carries the N-myristoyl glycine lipid modification. Residues 12–21 (PDQSQSQSPS) show a composition bias toward low complexity. Residues 22–40 (PHHKHHHHHQTTRAPKPKP) are compositionally biased toward basic residues. Residues 41–60 (KPQPPPPQQPRSQPPPPPRH) show a composition bias toward pro residues. Positions 61–71 (QPQQAPQQAAA) are enriched in low complexity. The Protein kinase domain maps to 90–348 (YTFGRELGRG…AAEILNHPWI (259 aa)). Residues 96–104 (LGRGQFGVT) and Lys119 contribute to the ATP site. Asp214 serves as the catalytic Proton acceptor. The autoinhibitory domain stretch occupies residues 354 to 384 (APDKPLDITVISRMKQFRAMNKLKKVALKVV). EF-hand domains lie at 391–426 (EEIVGLKEMFKSLDTDNSGTITLEELRAGLPKLGTK), 427–462 (ISESELRQLMEAADVDGNGSIDYVEFISATMHMNRL), 463–497 (EKEDHIYKAFEYFDKDHSGFITVDELEEALTKYDM), and 498–533 (GDEATIKEIIAEVDTDHDGRINYQEFVAMMKNNSPE). Ca(2+) is bound by residues Asp404, Asp406, Ser408, Thr410, Glu415, Asp440, Asp442, Asn444, Ser446, Glu451, Asp476, Asp478, Ser480, Glu487, Asp511, Asp513, Asp515, Arg517, and Glu522.

It belongs to the protein kinase superfamily. Ser/Thr protein kinase family. CDPK subfamily.

The protein resides in the membrane. It catalyses the reaction L-seryl-[protein] + ATP = O-phospho-L-seryl-[protein] + ADP + H(+). The catalysed reaction is L-threonyl-[protein] + ATP = O-phospho-L-threonyl-[protein] + ADP + H(+). With respect to regulation, activated by calcium. Autophosphorylation may play an important role in the regulation of the kinase activity. In terms of biological role, may play a role in signal transduction pathways that involve calcium as a second messenger. This chain is Calcium-dependent protein kinase 15, found in Oryza sativa subsp. japonica (Rice).